The sequence spans 238 residues: tRNA (guanine-N(7)-)-methyltransferase (238 aa).

Residues Glu-68, Glu-93, Asp-120, and Asp-143 each coordinate S-adenosyl-L-methionine. Asp-143 is an active-site residue. Residues Lys-147, Asp-179, and 216-219 each bind substrate; that span reads TKFE.

It belongs to the class I-like SAM-binding methyltransferase superfamily. TrmB family.

It carries out the reaction guanosine(46) in tRNA + S-adenosyl-L-methionine = N(7)-methylguanosine(46) in tRNA + S-adenosyl-L-homocysteine. It participates in tRNA modification; N(7)-methylguanine-tRNA biosynthesis. Its function is as follows. Catalyzes the formation of N(7)-methylguanine at position 46 (m7G46) in tRNA. This chain is tRNA (guanine-N(7)-)-methyltransferase, found in Shewanella amazonensis (strain ATCC BAA-1098 / SB2B).